Consider the following 86-residue polypeptide: UPF0386 protein RC1_1783 (86 aa).

The protein belongs to the UPF0386 family.

In Rhodospirillum centenum (strain ATCC 51521 / SW), this protein is UPF0386 protein RC1_1783.